The chain runs to 385 residues: Glucans biosynthesis protein C (385 aa).

The next 10 helical transmembrane spans lie at 17–37 (AWLM…SHTW), 60–80 (MQVF…RYPL), 91–111 (VGIP…IMLQ), 137–157 (ISHL…VWIF), 173–193 (KFSM…YAVI), 212–232 (FIVM…LAFI), 239–259 (LFTT…VAYL), 274–294 (TESV…FSFG), 311–331 (ASLF…AYIT), and 338–358 (WLGF…LYEI).

It belongs to the acyltransferase 3 family. OpgC subfamily.

It is found in the cell membrane. Its pathway is glycan metabolism; osmoregulated periplasmic glucan (OPG) biosynthesis. Necessary for the succinyl substitution of periplasmic glucans. Could catalyze the transfer of succinyl residues from the cytoplasmic side of the membrane to the nascent glucan backbones on the periplasmic side of the membrane. This chain is Glucans biosynthesis protein C, found in Escherichia coli (strain SMS-3-5 / SECEC).